The chain runs to 544 residues: MAKRIIYNEQARRALERGIDILAESVAVTLGPKGRNVVLEKKFGAPQIINDGVTIAKEIELEDHIENTGVALIRQAASKTNDAAGDGTTTATVLAHAMVKAGLRNVAAGANAITLKKGIDKATEFLVGKIEENSKPISDSTAIAQCGTIAAGNDEEVGEMIANAMDKVGKEGVISLEEGKSMTTELEVTEGMRFDKGYISPYFATDTERMEAVLDEPYILLTDKKIALVQDLVPVLEQIAKTGKPLVIIAEDIEKEALATLVVNRLRGVLNVAAVKAPGFGDRRKAMLEDMAVLTNGQLITEDAGLKLENATLEMLGTGRRITINKETTTIVAEGNEKAVTARCDQIKKQMDETDSSYDKEKLQERLAKLAGGVAVIKVGAATETEMKDKKLRLEDAINATKAAVEEGIVPGGGTTLAHLAPILKEWADKALSGEELIGANIVEASLTSPLMRIAENAGSNGAVIAENVKSKPFNDGFNAATGDYVDMSAAGIVDPAKVTRSGLQNAASIAGMVLTTECIVADLPEKKDAAPAGAPGMGGDFDY.

Residues 29-32, 86-90, Gly-413, 479-481, and Asp-495 contribute to the ATP site; these read TLGP, DGTTT, and NAA.

It belongs to the chaperonin (HSP60) family. As to quaternary structure, forms a cylinder of 14 subunits composed of two heptameric rings stacked back-to-back. Interacts with the co-chaperonin GroES.

Its subcellular location is the cytoplasm. The catalysed reaction is ATP + H2O + a folded polypeptide = ADP + phosphate + an unfolded polypeptide.. Functionally, together with its co-chaperonin GroES, plays an essential role in assisting protein folding. The GroEL-GroES system forms a nano-cage that allows encapsulation of the non-native substrate proteins and provides a physical environment optimized to promote and accelerate protein folding. This is Chaperonin GroEL 2 from Prochlorococcus marinus subsp. pastoris (strain CCMP1986 / NIES-2087 / MED4).